An 895-amino-acid chain; its full sequence is MTIYLCIAFNMVNTYIDYLRLRKYWKILNQIKKHREEIKQLTNNCLKIKTTEFKKRIKSGISLDQILPETFAVASEAAERVLGLNPYDVQMIGGIVLHEGKIAEMKTGEGKSLAASFPAYLNALTEKGVHIITVNDYLARRDYESIGKIFEFLGMKVGLINQYTPISKRKNNYLADITYVTNSEIGFDYLRDNMATQIKELTQRPFHFCIIDEVDSILIDESRTPLIISGRTKTRKDKYELAHRLANFLKKSIHYKIDEKNRTIILSDLGVITCEKILKIKSIYSAQNTWAHFIYNALKAKELYLKNVHYIVRDQQAIIVDEFTGRIMPERRWADGLHQSIEAKENLQIKEETKTLASITYQNLFLLYLKISGMTGTAKTEENELISIYSLPVICIPTYKSMIRKDLPDLIFQTEIEKLKAVTEECVKMHLLGRPILVGTTNIQKSEILSQLLNQYQIRHNLLNAKPQNVKRESEIIAQAGRKYAVTISTNMAGRGTDIILGGNLEYIIKNKITSLFKPIILTGNTQYIIIDKSLKSSGNEIRDINSNILKIINLHRQNPKLTIAEFGNSLNIASKKIKSNNEYILNLRSIYIIFENIYKKYFDIESKEVKNIGGLCVIGTERHESRRIDNQLRGRSGRQGDVGSSIFFISLEDNLLRIFGGERISKMMHTFMPSVNEPIQSPLLSRSLDSAQKKVESLHYNFRKQLFQYDQILNSQRKAIYLERRLILESNEIVAWTMAYMELTIIDILNDQYLYSHRKPRDKVLKNINKIYDLLASPISLIKIEKYTFNKKTILKQLKISYDLKKAQIDKTSCGLMKSLERSLILEQIDTNWSEHIQQMSFLKEFIGWRGYAQKDPLIEYKNESYILFIKMIRTIRQNILYLLFRAEPTLDFS.

ATP is bound by residues glutamine 90, 108-112 (GEGKS), and aspartate 498.

Belongs to the SecA family.

It is found in the plastid. The protein localises to the chloroplast stroma. The protein resides in the chloroplast thylakoid membrane. The enzyme catalyses ATP + H2O + cellular proteinSide 1 = ADP + phosphate + cellular proteinSide 2.. Has a central role in coupling the hydrolysis of ATP to the transfer of proteins across the thylakoid membrane. The polypeptide is Protein translocase subunit SecA (Cyanidium caldarium (Red alga)).